The sequence spans 250 residues: Ribosomal RNA small subunit methyltransferase J (250 aa).

S-adenosyl-L-methionine-binding positions include 101–102 (RD), 117–118 (ER), 153–154 (SS), and D171.

Belongs to the methyltransferase superfamily. RsmJ family.

It localises to the cytoplasm. The enzyme catalyses guanosine(1516) in 16S rRNA + S-adenosyl-L-methionine = N(2)-methylguanosine(1516) in 16S rRNA + S-adenosyl-L-homocysteine + H(+). Specifically methylates the guanosine in position 1516 of 16S rRNA. This is Ribosomal RNA small subunit methyltransferase J from Escherichia coli O81 (strain ED1a).